Here is a 1394-residue protein sequence, read N- to C-terminus: DNA-directed RNA polymerase subunit beta (1394 aa).

The protein belongs to the RNA polymerase beta chain family. In terms of assembly, the RNAP catalytic core consists of 2 alpha, 1 beta, 1 beta' and 1 omega subunit. When a sigma factor is associated with the core the holoenzyme is formed, which can initiate transcription.

It carries out the reaction RNA(n) + a ribonucleoside 5'-triphosphate = RNA(n+1) + diphosphate. DNA-dependent RNA polymerase catalyzes the transcription of DNA into RNA using the four ribonucleoside triphosphates as substrates. The polypeptide is DNA-directed RNA polymerase subunit beta (Anaplasma phagocytophilum (Ehrlichia phagocytophila)).